Reading from the N-terminus, the 194-residue chain is dITP/XTP pyrophosphatase (194 aa).

Ser-7 to Lys-12 contributes to the substrate binding site. Mg(2+) is bound by residues Glu-38 and Asp-67. Asp-67 acts as the Proton acceptor in catalysis. Residues Ser-68, Phe-151–Asp-154, Lys-174, and His-179–Arg-180 each bind substrate.

The protein belongs to the HAM1 NTPase family. Homodimer. Requires Mg(2+) as cofactor.

The enzyme catalyses XTP + H2O = XMP + diphosphate + H(+). It catalyses the reaction dITP + H2O = dIMP + diphosphate + H(+). It carries out the reaction ITP + H2O = IMP + diphosphate + H(+). Pyrophosphatase that catalyzes the hydrolysis of nucleoside triphosphates to their monophosphate derivatives, with a high preference for the non-canonical purine nucleotides XTP (xanthosine triphosphate), dITP (deoxyinosine triphosphate) and ITP. Seems to function as a house-cleaning enzyme that removes non-canonical purine nucleotides from the nucleotide pool, thus preventing their incorporation into DNA/RNA and avoiding chromosomal lesions. This chain is dITP/XTP pyrophosphatase, found in Treponema denticola (strain ATCC 35405 / DSM 14222 / CIP 103919 / JCM 8153 / KCTC 15104).